The chain runs to 639 residues: CRKSLLQAVANLPYKGGNTLTGMALNFIRQQNFKTQAGMRPRARKIGVLITDGKSQDDVEAPSKKLKDEGVELFAIGIKNADEVELKMIATDPDDTHAYNVADFDSLSKIVDDLTINLCNSVKGPGDLEAPSNLVISERTHRSFRVSWTPPSDSVDRYKVEYYPVSGGKRQEFYVSRLETSTVLKDLKPETEYVVNVYSVVEDEYSEPLKGTEKTLPVPIVSLNIYDIGPTTMRVQWQPVGGATGYTVSYEPVKTTESTKPKEMRVGPTVNDVQLTDLLPSTEYEVTVQAVLHDLTSEPATAREMTLPLPRPQDVKLRDVTHSTMSVFWEPVLGKVRKYVVRYQTPEEDVKEVEVDRSRTSTSLKDLLSQTLYTVSVSAVYDEGESPPVTAQETTRPVPAPTNLRITEVTPESFRGTWDHGASDVSLYRITWAPFGSSDKMETILNGDENTLVFENLNPNTLYEVSVTAIYPDESESDDLTGSERTSPKSGPRNLQVYNATSNSLTVKWDPASGRVQKYRITYQPSRGEGNEQTTTIGGRQNSVVLQKLKPDTPYTITVSSLYPDGEGGRMTGRGKTKPLNTVRNLRVYDPSTSTLNVRWDHAEGNPRQYKLFYAPTAGGSEELVPIPGNTNYAILRNL.

A VWFA domain is found at 1–114; sequence CRKSLLQAVA…DSLSKIVDDL (114 aa). Fibronectin type-III domains follow at residues 130-219, 220-310, 311-401, 402-490, 491-585, and 586-639; these read APSN…LPVP, IVSL…LPLP, RPQD…VPAP, TNLR…SPKS, GPRN…TVRN, and LRVY…LRNL. The interval 473–496 is disordered; sequence DESESDDLTGSERTSPKSGPRNLQ.

Belongs to the fibril-associated collagens with interrupted helices (FACIT) family. In terms of assembly, trimer of identical chains each containing 190 kDa of non-triple-helical sequences. Post-translationally, the triple-helical tail is stabilized by disulfide bonds at each end. In terms of processing, prolines at the third position of the tripeptide repeating unit (G-X-Y) are hydroxylated in some or all of the chains. O-glycosylated; glycosaminoglycan of chondroitin-sulfate type.

The protein resides in the secreted. It localises to the extracellular space. Its subcellular location is the extracellular matrix. Functionally, type XII collagen interacts with type I collagen-containing fibrils, the COL1 domain could be associated with the surface of the fibrils, and the COL2 and NC3 domains may be localized in the perifibrillar matrix. The polypeptide is Collagen alpha-1(XII) chain (COL12A1) (Oryctolagus cuniculus (Rabbit)).